The sequence spans 89 residues: Large ribosomal subunit protein bL28 (89 aa).

Belongs to the bacterial ribosomal protein bL28 family.

In Chlamydia abortus (strain DSM 27085 / S26/3) (Chlamydophila abortus), this protein is Large ribosomal subunit protein bL28.